The primary structure comprises 433 residues: Tol-Pal system protein TolB (433 aa).

The first 26 residues, 1 to 26 (MNKLRLFRSFFAFLLPFGMATGAAHG), serve as a signal peptide directing secretion.

It belongs to the TolB family. As to quaternary structure, the Tol-Pal system is composed of five core proteins: the inner membrane proteins TolA, TolQ and TolR, the periplasmic protein TolB and the outer membrane protein Pal. They form a network linking the inner and outer membranes and the peptidoglycan layer.

It localises to the periplasm. Part of the Tol-Pal system, which plays a role in outer membrane invagination during cell division and is important for maintaining outer membrane integrity. The chain is Tol-Pal system protein TolB from Methylobacillus flagellatus (strain ATCC 51484 / DSM 6875 / VKM B-1610 / KT).